The chain runs to 227 residues: 7-cyano-7-deazaguanine synthase (227 aa).

Position 8 to 18 (8 to 18 (VSGGADSATVL)) interacts with ATP. Zn(2+) contacts are provided by cysteine 192, cysteine 202, cysteine 205, and cysteine 208.

It belongs to the QueC family. It depends on Zn(2+) as a cofactor.

The enzyme catalyses 7-carboxy-7-deazaguanine + NH4(+) + ATP = 7-cyano-7-deazaguanine + ADP + phosphate + H2O + H(+). Its pathway is purine metabolism; 7-cyano-7-deazaguanine biosynthesis. In terms of biological role, catalyzes the ATP-dependent conversion of 7-carboxy-7-deazaguanine (CDG) to 7-cyano-7-deazaguanine (preQ(0)). The polypeptide is 7-cyano-7-deazaguanine synthase (Rickettsia akari (strain Hartford)).